A 244-amino-acid chain; its full sequence is Probable proteasome subunit alpha type-1 (244 aa).

Belongs to the peptidase T1A family. As to quaternary structure, the 26S proteasome consists of a 20S proteasome core and two 19S regulatory subunits. The 20S proteasome core is composed of 28 subunits that are arranged in four stacked rings, resulting in a barrel-shaped structure. The two end rings are each formed by seven alpha subunits, and the two central rings are each formed by seven beta subunits. The catalytic chamber with the active sites is on the inside of the barrel.

The protein localises to the cytoplasm. Its subcellular location is the nucleus. In terms of biological role, the proteasome is a multicatalytic proteinase complex which is characterized by its ability to cleave peptides with Arg, Phe, Tyr, Leu, and Glu adjacent to the leaving group at neutral or slightly basic pH. The proteasome has an ATP-dependent proteolytic activity. This Schizosaccharomyces pombe (strain 972 / ATCC 24843) (Fission yeast) protein is Probable proteasome subunit alpha type-1.